The chain runs to 263 residues: Probable methylthioribulose-1-phosphate dehydratase (263 aa).

Cysteine 102 serves as a coordination point for substrate. Positions 120 and 122 each coordinate Zn(2+). The active-site Proton donor/acceptor is the glutamate 144. Histidine 200 serves as a coordination point for Zn(2+).

Belongs to the aldolase class II family. MtnB subfamily. Zn(2+) serves as cofactor.

The protein resides in the cytoplasm. It carries out the reaction 5-(methylsulfanyl)-D-ribulose 1-phosphate = 5-methylsulfanyl-2,3-dioxopentyl phosphate + H2O. The protein operates within amino-acid biosynthesis; L-methionine biosynthesis via salvage pathway; L-methionine from S-methyl-5-thio-alpha-D-ribose 1-phosphate: step 2/6. Its function is as follows. Catalyzes the dehydration of methylthioribulose-1-phosphate (MTRu-1-P) into 2,3-diketo-5-methylthiopentyl-1-phosphate (DK-MTP-1-P). The sequence is that of Probable methylthioribulose-1-phosphate dehydratase from Caenorhabditis elegans.